The following is a 217-amino-acid chain: Octanoyltransferase (217 aa).

The region spanning 32 to 207 (NDSPDELWIV…TLSQLLGYQH (176 aa)) is the BPL/LPL catalytic domain. Substrate is bound by residues 71–78 (RGGQVTYH), 138–140 (SLG), and 151–153 (GLA). The active-site Acyl-thioester intermediate is the Cys-169.

This sequence belongs to the LipB family.

Its subcellular location is the cytoplasm. It carries out the reaction octanoyl-[ACP] + L-lysyl-[protein] = N(6)-octanoyl-L-lysyl-[protein] + holo-[ACP] + H(+). Its pathway is protein modification; protein lipoylation via endogenous pathway; protein N(6)-(lipoyl)lysine from octanoyl-[acyl-carrier-protein]: step 1/2. Functionally, catalyzes the transfer of endogenously produced octanoic acid from octanoyl-acyl-carrier-protein onto the lipoyl domains of lipoate-dependent enzymes. Lipoyl-ACP can also act as a substrate although octanoyl-ACP is likely to be the physiological substrate. In Shewanella oneidensis (strain ATCC 700550 / JCM 31522 / CIP 106686 / LMG 19005 / NCIMB 14063 / MR-1), this protein is Octanoyltransferase.